The chain runs to 775 residues: Armadillo-like helical domain-containing protein 4 (775 aa).

Positions 1 to 47 (MLQDSITGIVNSFNLFFPSTMSRPTLMPTCVAFCSILFLTLATGCQA) are cleaved as a signal peptide. Topologically, residues 48–715 (FPKVERRETA…KDKAGYMSGM (668 aa)) are extracellular. The N-linked (GlcNAc...) asparagine glycan is linked to N76. Disordered regions lie at residues 120-148 (AGLL…PGPS), 247-273 (VPGV…DGQS), and 324-366 (KFES…PSST). Residues 129–142 (GVYSSSEPVVSASE) are compositionally biased toward polar residues. The span at 324–335 (KFESISRGRPPE) shows a compositional bias: basic and acidic residues. N-linked (GlcNAc...) asparagine glycosylation is present at N476. Residues 559 to 669 (IPVLGSPMAP…PGITSQEPDI (111 aa)) are disordered. The segment covering 577 to 599 (TISSALPSEGRTSPSISRPNTAA) has biased composition (polar residues). Over residues 606 to 640 (LESEEVEDDEDEEDEEDEEEEEEDEEDEEDEEDKE) the composition is skewed to acidic residues. The helical transmembrane segment at 716-736 (LVPVGVGIAGALFILGALYSI) threads the bilayer. Residues 737–775 (KVMNRRRRNGFKRHKRKQREFNSMQDRVMLLADSSEDEF) lie on the Cytoplasmic side of the membrane. S770 and S771 each carry phosphoserine.

As to quaternary structure, interacts with IL6ST; this interaction prevents IL6ST protein homodimerization and bridges ARMH4 with IL6R and STAT3 and therefore inhibits phosphorylation of STAT3 at 'Tyr-705'. Interacts (via cytoplasmic tail) with RICTOR; this interaction bridges ARMH4 to the mTORC2 complex and inhibits the mTORC2 kinase activity. In terms of tissue distribution, expressed in bone-marroew cells.

It is found in the membrane. Functionally, may modulate immune response and may play a role in inflammation. Down-modulates STAT3 signaling throught direct interaction with IL6ST, resulting in the inhibition of phosphorylation of STAT3 at 'Tyr-705'. May negatively regulates AKT signaling by modulating the activity of mTORC2 complex through RICTOR interaction. The protein is Armadillo-like helical domain-containing protein 4 of Mus musculus (Mouse).